Reading from the N-terminus, the 149-residue chain is Bis(5'-adenosyl)-triphosphatase (149 aa).

The HIT domain maps to 2-109 (SFRFGQHLIK…LPRKAGDFHR (108 aa)). Residues H8, N27, Q83, and 89-92 (GQTV) contribute to the substrate site. The Histidine triad motif signature appears at 94–98 (HVHVH). The active-site Tele-AMP-histidine intermediate is the H96. Position 98 (H98) interacts with substrate. A phosphotyrosine mark is found at Y114 and Y147.

Homodimer. Interacts with UBE2I. Interacts with MDM2. Interacts with CTNNB1. Identified in a complex with CTNNB1 and LEF1. Post-translationally, phosphorylation at Tyr-114 by SRC is required for induction of apoptosis. In terms of tissue distribution, expressed in the brain, kidney, spleen, testis and lung.

It is found in the cytoplasm. Its subcellular location is the nucleus. The protein resides in the mitochondrion. It carries out the reaction P(1),P(3)-bis(5'-adenosyl) triphosphate + H2O = AMP + ADP + 2 H(+). The enzyme catalyses adenosine 5'-phosphosulfate + H2O = sulfate + AMP + 2 H(+). The catalysed reaction is adenosine 5'-phosphosulfate + NH4(+) = adenosine 5'-phosphoramidate + sulfate + 2 H(+). It catalyses the reaction adenosine 5'-phosphoramidate + H2O = AMP + NH4(+). Possesses dinucleoside triphosphate hydrolase activity. Cleaves P(1)-P(3)-bis(5'-adenosyl) triphosphate (Ap3A) to yield AMP and ADP. Can also hydrolyze P(1)-P(4)-bis(5'-adenosyl) tetraphosphate (Ap4A), but has extremely low activity with ATP. Exhibits adenylylsulfatase activity, hydrolyzing adenosine 5'-phosphosulfate to yield AMP and sulfate. Exhibits adenosine 5'-monophosphoramidase activity, hydrolyzing purine nucleotide phosphoramidates with a single phosphate group such as adenosine 5'monophosphoramidate (AMP-NH2) to yield AMP and NH2. Exhibits adenylylsulfate-ammonia adenylyltransferase, catalyzing the ammonolysis of adenosine 5'-phosphosulfate resulting in the formation of adenosine 5'-phosphoramidate. Also catalyzes the ammonolysis of adenosine 5-phosphorofluoridate and diadenosine triphosphate. Modulates transcriptional activation by CTNNB1 and thereby contributes to regulate the expression of genes essential for cell proliferation and survival, such as CCND1 and BIRC5. Plays a role in the induction of apoptosis via SRC and AKT1 signaling pathways. Inhibits MDM2-mediated proteasomal degradation of p53/TP53 and thereby plays a role in p53/TP53-mediated apoptosis. Induction of apoptosis depends on the ability of FHIT to bind P(1)-P(3)-bis(5'-adenosyl) triphosphate or related compounds, but does not require its catalytic activity Functions as a tumor suppressor. This chain is Bis(5'-adenosyl)-triphosphatase (FHIT), found in Bos taurus (Bovine).